Here is a 272-residue protein sequence, read N- to C-terminus: MISNPSLLSYTCIAKGTVVLAEFVSRQEPGIEAIALRCIENTPPHHSMFSHTVHKKTYTFAIDDDSFVYFSISDESMEKPESFWVLNRLRSAIEDLIKDGGSDVETLINPVSHCLQLKLDPVFAEIVGVVDLELLDMDLVGSPRSVARESRNPSIDSSKGRRAALMPLLGKPLKALKKKKRLHNEAKGGDSCEVGSIQEISEKNVDLCGNGNNGVLRKELRNGLLSDHHHRQKAKQIWKKHVWVVLMFDFCICAVLFGIWLWICEGFQCIQG.

The Longin domain maps to C12–Q116. The helical; Anchor for type IV membrane protein transmembrane segment at W243 to I263 threads the bilayer.

It belongs to the synaptobrevin family.

The protein resides in the membrane. Non-SNARE longin protein involved in membrane-trafficking machinery. The chain is Phytolongin Phyl2.2 from Arabidopsis thaliana (Mouse-ear cress).